A 150-amino-acid polypeptide reads, in one-letter code: Large ribosomal subunit protein bL9 (150 aa).

Belongs to the bacterial ribosomal protein bL9 family.

Its function is as follows. Binds to the 23S rRNA. This is Large ribosomal subunit protein bL9 from Wolinella succinogenes (strain ATCC 29543 / DSM 1740 / CCUG 13145 / JCM 31913 / LMG 7466 / NCTC 11488 / FDC 602W) (Vibrio succinogenes).